A 353-amino-acid chain; its full sequence is Thiamine-phosphate synthase (353 aa).

Residues 1–128 (MELMVVEADA…ASTAAEIRYG (128 aa)) form a unknown region. Residues 129–353 (LYDLEVRILE…ASRTLLQTLA (225 aa)) are thiamine-phosphate synthase. 4-amino-2-methyl-5-(diphosphooxymethyl)pyrimidine is bound by residues 185-189 (QYRRK) and Asn-217. Asp-218 and Asp-237 together coordinate Mg(2+). Residue Ser-256 participates in 4-amino-2-methyl-5-(diphosphooxymethyl)pyrimidine binding. 282–284 (TKT) lines the 2-[(2R,5Z)-2-carboxy-4-methylthiazol-5(2H)-ylidene]ethyl phosphate pocket. Lys-285 lines the 4-amino-2-methyl-5-(diphosphooxymethyl)pyrimidine pocket. Position 312 (Gly-312) interacts with 2-[(2R,5Z)-2-carboxy-4-methylthiazol-5(2H)-ylidene]ethyl phosphate.

Belongs to the thiamine-phosphate synthase family. It depends on Mg(2+) as a cofactor.

The enzyme catalyses 2-[(2R,5Z)-2-carboxy-4-methylthiazol-5(2H)-ylidene]ethyl phosphate + 4-amino-2-methyl-5-(diphosphooxymethyl)pyrimidine + 2 H(+) = thiamine phosphate + CO2 + diphosphate. It catalyses the reaction 2-(2-carboxy-4-methylthiazol-5-yl)ethyl phosphate + 4-amino-2-methyl-5-(diphosphooxymethyl)pyrimidine + 2 H(+) = thiamine phosphate + CO2 + diphosphate. The catalysed reaction is 4-methyl-5-(2-phosphooxyethyl)-thiazole + 4-amino-2-methyl-5-(diphosphooxymethyl)pyrimidine + H(+) = thiamine phosphate + diphosphate. It functions in the pathway cofactor biosynthesis; thiamine diphosphate biosynthesis; thiamine phosphate from 4-amino-2-methyl-5-diphosphomethylpyrimidine and 4-methyl-5-(2-phosphoethyl)-thiazole: step 1/1. Functionally, condenses 4-methyl-5-(beta-hydroxyethyl)thiazole monophosphate (THZ-P) and 2-methyl-4-amino-5-hydroxymethyl pyrimidine pyrophosphate (HMP-PP) to form thiamine monophosphate (TMP). The chain is Thiamine-phosphate synthase from Synechococcus sp. (strain CC9311).